The primary structure comprises 485 residues: Probable carboxypeptidase S-like 1 (485 aa).

The N-terminal stretch at 1 to 21 (MIFKFFFIFFLIILVIKISES) is a signal peptide. Residue histidine 111 participates in Zn(2+) binding. Aspartate 113 is a catalytic residue. Residue aspartate 142 coordinates Zn(2+). Glutamate 177 acts as the Proton acceptor in catalysis. Zn(2+)-binding residues include glutamate 178, aspartate 204, and histidine 431.

The protein belongs to the peptidase M20A family. Requires Zn(2+) as cofactor.

It is found in the secreted. This chain is Probable carboxypeptidase S-like 1, found in Dictyostelium discoideum (Social amoeba).